Consider the following 154-residue polypeptide: 6,7-dimethyl-8-ribityllumazine synthase (154 aa).

Residues F22, 56-58 (AFE), and 80-82 (AVI) contribute to the 5-amino-6-(D-ribitylamino)uracil site. (2S)-2-hydroxy-3-oxobutyl phosphate is bound at residue 85–86 (AT). H88 functions as the Proton donor in the catalytic mechanism. F113 provides a ligand contact to 5-amino-6-(D-ribitylamino)uracil. (2S)-2-hydroxy-3-oxobutyl phosphate is bound at residue R127.

This sequence belongs to the DMRL synthase family. In terms of assembly, forms an icosahedral capsid composed of 60 subunits, arranged as a dodecamer of pentamers.

It carries out the reaction (2S)-2-hydroxy-3-oxobutyl phosphate + 5-amino-6-(D-ribitylamino)uracil = 6,7-dimethyl-8-(1-D-ribityl)lumazine + phosphate + 2 H2O + H(+). Its pathway is cofactor biosynthesis; riboflavin biosynthesis; riboflavin from 2-hydroxy-3-oxobutyl phosphate and 5-amino-6-(D-ribitylamino)uracil: step 1/2. Functionally, catalyzes the formation of 6,7-dimethyl-8-ribityllumazine by condensation of 5-amino-6-(D-ribitylamino)uracil with 3,4-dihydroxy-2-butanone 4-phosphate. This is the penultimate step in the biosynthesis of riboflavin. The protein is 6,7-dimethyl-8-ribityllumazine synthase of Geobacillus sp. (strain WCH70).